Reading from the N-terminus, the 416-residue chain is Peptide chain release factor subunit 1 (416 aa).

It belongs to the eukaryotic release factor 1 family. As to quaternary structure, heterodimer of two subunits, one of which binds GTP.

It localises to the cytoplasm. Functionally, directs the termination of nascent peptide synthesis (translation) in response to the termination codons UAA, UAG and UGA. The protein is Peptide chain release factor subunit 1 of Halobacterium salinarum (strain ATCC 29341 / DSM 671 / R1).